The following is a 316-amino-acid chain: Erythritol catabolism regulatory protein EryD (316 aa).

Positions 23–42 (QSAVAKRLGLPSVKAHRLIA) form a DNA-binding region, H-T-H motif.

It belongs to the SorC transcriptional regulatory family.

Erythritol may act as an inducer, probably by binding to EryD and inhibiting its repressor activity. Represses the expression of the eryABCD operon, which is involved in erythritol catabolism. The chain is Erythritol catabolism regulatory protein EryD from Brucella abortus (strain 2308).